We begin with the raw amino-acid sequence, 633 residues long: Dynein axonemal assembly factor 1 (633 aa).

The segment at 1-80 (MHPEASEPPV…SRDDRDDRGP (80 aa)) is disordered. The span at 22–42 (AGDHGDAGPGVRKEEINETKE) shows a compositional bias: basic and acidic residues. Low complexity predominate over residues 46-60 (GPCTTSCQSQQQPSG). Over residues 70 to 80 (HSRDDRDDRGP) the composition is skewed to basic and acidic residues. 6 LRR repeats span residues 101 to 123 (ALND…EEYT), 124 to 145 (GLRC…QAQS), 146 to 167 (ELRC…EPLQ), 168 to 189 (KLDA…SCLP), 190 to 211 (VLNT…EHLR), and 215 to 236 (QLCV…SVLE). The LRRCT domain maps to 249 to 288 (NPVTKHIPNYRRTVTVRLKHLTYLDDRPVFPKDRACAEAW). Residues 326 to 344 (EERKKARDRGETPLPESEK) are compositionally biased toward basic and acidic residues. Disordered regions lie at residues 326–364 (EERK…TQQK) and 404–436 (LSGN…RTED). Phosphoserine is present on S349. Basic and acidic residues predominate over residues 352–364 (AQEKPPKGETQQK). Positions 413–427 (TPVVVTPEEVTSPVE) are enriched in low complexity. The residue at position 462 (T462) is a Phosphothreonine. Phosphoserine occurs at positions 465 and 488. Composition is skewed to polar residues over residues 538–555 (TTDL…SSHP) and 568–592 (GESN…SEGG). The segment at 538–633 (TTDLETQSQD…GLEDIEFGLD (96 aa)) is disordered.

This sequence belongs to the DNAAF1 family.

The protein resides in the cell projection. It localises to the cilium. Cilium-specific protein required for the stability of the ciliary architecture. Plays a role in cytoplasmic preassembly of dynein arms. Involved in regulation of microtubule-based cilia and actin-based brush border microvilli. The chain is Dynein axonemal assembly factor 1 (Dnaaf1) from Rattus norvegicus (Rat).